We begin with the raw amino-acid sequence, 837 residues long: Striatin-interacting protein 1 (837 aa).

M1 carries the N-acetylmethionine modification. 2 disordered regions span residues M1–D67 and A333–P423. Residues P18–A35 are compositionally biased toward pro residues. A compositionally biased stretch (low complexity) spans P36 to G46. The span at K47–E60 shows a compositional bias: basic and acidic residues. A phosphoserine mark is found at S59, S335, and S339. Over residues K356 to D377 the composition is skewed to basic and acidic residues. Positions S378 to L391 are enriched in acidic residues. Phosphoserine is present on S788. Residues D796–Q837 are required for STRIPAK core complex formation.

The protein belongs to the STRIP family. In terms of assembly, part of the core of STRIPAK complexes composed of PP2A catalytic and scaffolding subunits, the striatins (PP2A regulatory subunits), the striatin-associated proteins MOB4, STRIP1 and STRIP2, PDCD10 and members of the STE20 kinases, such as STK24 and STK26. The STRIPAK complex can be extended by adapter proteins such as SLMAP:SIKE1, CTTNBP2 or CTTNBP2NL. Interacts with CDC42BPB. Interacts with CTTNBP2NL.

Its subcellular location is the cytoplasm. Plays a role in the regulation of cell morphology and cytoskeletal organization. Required in the cortical actin filament dynamics and cell shape. Part of the striatin-interacting phosphatase and kinase (STRIPAK) complexes. STRIPAK complexes have critical roles in protein (de)phosphorylation and are regulators of multiple signaling pathways including Hippo, MAPK, nuclear receptor and cytoskeleton remodeling. Different types of STRIPAK complexes are involved in a variety of biological processes such as cell growth, differentiation, apoptosis, metabolism and immune regulation. The protein is Striatin-interacting protein 1 of Homo sapiens (Human).